Reading from the N-terminus, the 129-residue chain is Phosphoribosyl-AMP cyclohydrolase (129 aa).

D78 is a binding site for Mg(2+). C79 provides a ligand contact to Zn(2+). Mg(2+)-binding residues include D80 and D82. 2 residues coordinate Zn(2+): C96 and C103.

Belongs to the PRA-CH family. Homodimer. The cofactor is Mg(2+). It depends on Zn(2+) as a cofactor.

Its subcellular location is the cytoplasm. The catalysed reaction is 1-(5-phospho-beta-D-ribosyl)-5'-AMP + H2O = 1-(5-phospho-beta-D-ribosyl)-5-[(5-phospho-beta-D-ribosylamino)methylideneamino]imidazole-4-carboxamide. It participates in amino-acid biosynthesis; L-histidine biosynthesis; L-histidine from 5-phospho-alpha-D-ribose 1-diphosphate: step 3/9. Functionally, catalyzes the hydrolysis of the adenine ring of phosphoribosyl-AMP. This is Phosphoribosyl-AMP cyclohydrolase from Nitrosomonas europaea (strain ATCC 19718 / CIP 103999 / KCTC 2705 / NBRC 14298).